We begin with the raw amino-acid sequence, 627 residues long: DNA-directed RNA polymerase subunit gamma (627 aa).

Zn(2+) contacts are provided by Cys70, Cys72, Cys85, and Cys88. Positions 468, 470, and 472 each coordinate Mg(2+).

The protein belongs to the RNA polymerase beta' chain family. RpoC1 subfamily. In cyanobacteria the RNAP catalytic core is composed of 2 alpha, 1 beta, 1 beta', 1 gamma and 1 omega subunit. When a sigma factor is associated with the core the holoenzyme is formed, which can initiate transcription. Mg(2+) is required as a cofactor. Zn(2+) serves as cofactor.

It catalyses the reaction RNA(n) + a ribonucleoside 5'-triphosphate = RNA(n+1) + diphosphate. In terms of biological role, DNA-dependent RNA polymerase catalyzes the transcription of DNA into RNA using the four ribonucleoside triphosphates as substrates. The protein is DNA-directed RNA polymerase subunit gamma of Synechococcus sp. (strain JA-3-3Ab) (Cyanobacteria bacterium Yellowstone A-Prime).